The sequence spans 341 residues: Dihydroorotate dehydrogenase (quinone) (341 aa).

FMN is bound by residues 62 to 66 (AGMDK) and Thr86. Position 66 (Lys66) interacts with substrate. A substrate-binding site is contributed by 111–115 (NRMGF). Asn139 and Asn172 together coordinate FMN. Asn172 is a binding site for substrate. Residue Ser175 is the Nucleophile of the active site. Substrate is bound at residue Asn177. Residues Lys217 and Thr245 each contribute to the FMN site. A substrate-binding site is contributed by 246–247 (NT). FMN contacts are provided by residues Gly268, Gly297, and 318-319 (YS).

This sequence belongs to the dihydroorotate dehydrogenase family. Type 2 subfamily. In terms of assembly, monomer. FMN serves as cofactor.

Its subcellular location is the cell membrane. The enzyme catalyses (S)-dihydroorotate + a quinone = orotate + a quinol. It participates in pyrimidine metabolism; UMP biosynthesis via de novo pathway; orotate from (S)-dihydroorotate (quinone route): step 1/1. Catalyzes the conversion of dihydroorotate to orotate with quinone as electron acceptor. The chain is Dihydroorotate dehydrogenase (quinone) from Shewanella loihica (strain ATCC BAA-1088 / PV-4).